The chain runs to 103 residues: Histone H4 (103 aa).

The span at 1 to 14 (MSGRGKGGKGLGKG) shows a compositional bias: gly residues. Positions 1–20 (MSGRGKGGKGLGKGGAKRHR) are disordered. At S2 the chain carries N-acetylserine. N6-acetyl-N6-methyllysine; alternate occurs at positions 6 and 13. A DNA-binding region spans residues 17–21 (KRHRK). An N6-methyllysine modification is found at K21.

This sequence belongs to the histone H4 family. The nucleosome is a histone octamer containing two molecules each of H2A, H2B, H3 and H4 assembled in one H3-H4 heterotetramer and two H2A-H2B heterodimers. The octamer wraps approximately 147 bp of DNA.

The protein localises to the nucleus. Its subcellular location is the chromosome. In terms of biological role, core component of nucleosome. Nucleosomes wrap and compact DNA into chromatin, limiting DNA accessibility to the cellular machineries which require DNA as a template. Histones thereby play a central role in transcription regulation, DNA repair, DNA replication and chromosomal stability. DNA accessibility is regulated via a complex set of post-translational modifications of histones, also called histone code, and nucleosome remodeling. The chain is Histone H4 from Solaster stimpsoni (Striped sun sea star).